The following is a 912-amino-acid chain: Vomeronasal type-2 receptor 1 (912 aa).

The signal sequence occupies residues Met-1–Gly-21. Residues Ala-22–Thr-623 lie on the Extracellular side of the membrane. Asn-24, Asn-38, Asn-299, and Asn-386 each carry an N-linked (GlcNAc...) asparagine glycan. A helical transmembrane segment spans residues Leu-624–Ile-644. The Cytoplasmic segment spans residues His-645–Glu-657. A helical transmembrane segment spans residues Leu-658–Gly-678. Residues Lys-679 to Thr-691 lie on the Extracellular side of the membrane. A helical transmembrane segment spans residues Leu-692–Phe-712. Over Ala-713–Lys-732 the chain is Cytoplasmic. A helical membrane pass occupies residues Leu-733–Glu-753. Residues Pro-754–Glu-778 lie on the Extracellular side of the membrane. Residues Phe-779 to Phe-799 traverse the membrane as a helical segment. Residues Val-800 to Lys-812 lie on the Cytoplasmic side of the membrane. Residues Cys-813 to Leu-833 traverse the membrane as a helical segment. The Extracellular segment spans residues Ser-834–Lys-840. A helical membrane pass occupies residues Val-841–Leu-861. Residues Pro-862–Glu-912 are Cytoplasmic-facing.

The protein belongs to the G-protein coupled receptor 3 family. In terms of tissue distribution, expressed at the sensory surface of the vomeronasal organ.

It localises to the cell membrane. Its function is as follows. Putative pheromone receptor. The chain is Vomeronasal type-2 receptor 1 (Vmn2r1) from Mus musculus (Mouse).